Consider the following 237-residue polypeptide: tRNA1(Val) (adenine(37)-N6)-methyltransferase (237 aa).

The protein belongs to the methyltransferase superfamily. tRNA (adenine-N(6)-)-methyltransferase family.

It is found in the cytoplasm. The enzyme catalyses adenosine(37) in tRNA1(Val) + S-adenosyl-L-methionine = N(6)-methyladenosine(37) in tRNA1(Val) + S-adenosyl-L-homocysteine + H(+). Functionally, specifically methylates the adenine in position 37 of tRNA(1)(Val) (anticodon cmo5UAC). In Tolumonas auensis (strain DSM 9187 / NBRC 110442 / TA 4), this protein is tRNA1(Val) (adenine(37)-N6)-methyltransferase.